The chain runs to 387 residues: S-adenosylmethionine synthase (387 aa).

ATP is bound at residue histidine 17. Aspartate 19 lines the Mg(2+) pocket. Position 45 (glutamate 45) interacts with K(+). Residues glutamate 58 and glutamine 101 each contribute to the L-methionine site. Residues 101–111 (QSPDIAQGVDR) are flexible loop. Residues 168 to 170 (DAK), 234 to 235 (RF), aspartate 243, 249 to 250 (RK), alanine 266, and lysine 270 contribute to the ATP site. Residue aspartate 243 coordinates L-methionine. Lysine 274 is a binding site for L-methionine.

It belongs to the AdoMet synthase family. As to quaternary structure, homotetramer; dimer of dimers. It depends on Mg(2+) as a cofactor. Requires K(+) as cofactor.

The protein resides in the cytoplasm. It catalyses the reaction L-methionine + ATP + H2O = S-adenosyl-L-methionine + phosphate + diphosphate. Its pathway is amino-acid biosynthesis; S-adenosyl-L-methionine biosynthesis; S-adenosyl-L-methionine from L-methionine: step 1/1. Functionally, catalyzes the formation of S-adenosylmethionine (AdoMet) from methionine and ATP. The overall synthetic reaction is composed of two sequential steps, AdoMet formation and the subsequent tripolyphosphate hydrolysis which occurs prior to release of AdoMet from the enzyme. The protein is S-adenosylmethionine synthase of Bordetella bronchiseptica (strain ATCC BAA-588 / NCTC 13252 / RB50) (Alcaligenes bronchisepticus).